The chain runs to 230 residues: Ion-translocating oxidoreductase complex subunit E (230 aa).

The next 6 helical transmembrane spans lie at 18 to 38, 39 to 59, 69 to 89, 93 to 113, 124 to 144, and 182 to 202; these read ALVQLLGLCPLLAVSSTITNA, LGLGIATLLVLVGSNVTVSLI, IPVFVMIIASLVTCVQLLMNA, GLYLSLGIFIPLIVTNCIIIG, VLPAALDGLWMGLGMTSVLVV, and SFLLALLPPGAFIGVGLLIAL.

It belongs to the NqrDE/RnfAE family. In terms of assembly, the complex is composed of six subunits: RnfA, RnfB, RnfC, RnfD, RnfE and RnfG.

The protein localises to the cell inner membrane. Functionally, part of a membrane-bound complex that couples electron transfer with translocation of ions across the membrane. The polypeptide is Ion-translocating oxidoreductase complex subunit E (Vibrio parahaemolyticus serotype O3:K6 (strain RIMD 2210633)).